A 483-amino-acid chain; its full sequence is PAT complex subunit CCDC47 (483 aa).

The signal sequence occupies residues 1-20; it reads MKAFYAFCVVLLVFGSVSEA. The Cytoplasmic segment spans residues 21 to 135; sequence KFDDFEDEED…PAHLQNSWES (115 aa). The interval 46–119 is disordered; that stretch reads MEDSVTESPQ…DTSSNKNKDP (74 aa). Residues 60 to 104 show a composition bias toward acidic residues; the sequence is TEDDEDEATVELEGQDESQEGDFEDADTQEGDTESEPYDDEEFEG. Over residues 105–118 the composition is skewed to basic and acidic residues; the sequence is YEDKPDTSSNKNKD. A helical membrane pass occupies residues 136-156; sequence YYLEILMVTGLLAYIMNYIIG. The Lumenal segment spans residues 157–483; sequence KNKNSRLAQA…KMKQIKVKAM (327 aa). The N-linked (GlcNAc...) asparagine glycan is linked to Asn178. The interval 424–483 is disordered; the sequence is QRQEAAQSRREEKKRAEKERIMNEEDPEKQRRLEEAALRREQKKLEKKQMKMKQIKVKAM. The span at 430–472 shows a compositional bias: basic and acidic residues; sequence QSRREEKKRAEKERIMNEEDPEKQRRLEEAALRREQKKLEKKQ. A coiled-coil region spans residues 450–483; it reads PEKQRRLEEAALRREQKKLEKKQMKMKQIKVKAM. Residues 473 to 483 show a composition bias toward basic residues; the sequence is MKMKQIKVKAM.

The protein belongs to the CCDC47 family. Component of the PAT complex, composed of WDR83OS/Asterix and CCDC47. The PAT complex is part of the multi-pass translocon (MPT) complex, composed of three subcomplexes, the GEL complex (composed of RAB5IF/OPTI and TMCO1), the BOS complex (composed of NCLN/Nicalin, NOMO1 and TMEM147) and the PAT complex (composed of WDR83OS/Asterix and CCDC47). The MPT complex associates with the SEC61 complex. Interacts with VCP, HSPA5, DERL1, DERL2 and SELENOS. In terms of tissue distribution, in the embryo, expressed in the endodermal layer of the yolk sac and in the small intestine.

The protein localises to the endoplasmic reticulum membrane. Its subcellular location is the rough endoplasmic reticulum membrane. Component of the multi-pass translocon (MPT) complex that mediates insertion of multi-pass membrane proteins into the lipid bilayer of membranes. The MPT complex takes over after the SEC61 complex: following membrane insertion of the first few transmembrane segments of proteins by the SEC61 complex, the MPT complex occludes the lateral gate of the SEC61 complex to promote insertion of subsequent transmembrane regions. Within the MPT complex, the PAT subcomplex sequesters any highly polar regions in the transmembrane domains away from the non-polar membrane environment until they can be buried in the interior of the fully assembled protein. Within the PAT subcomplex, CCDC47 occludes the lateral gate of the SEC61 complex. Involved in the regulation of calcium ion homeostasis in the ER. Required for proper protein degradation via the ERAD (ER-associated degradation) pathway. Has an essential role in the maintenance of ER organization during embryogenesis. This Mus musculus (Mouse) protein is PAT complex subunit CCDC47.